A 540-amino-acid chain; its full sequence is Putative F-box/LRR-repeat protein At5g41840 (540 aa).

The region spanning 13–61 is the F-box domain; it reads GDRISGLPDALICHILSFLPTKEAASTTVLAKRWKPLLAFVPNLNFDDS. LRR repeat units follow at residues 80–105, 137–165, 189–214, 217–242, 254–282, 329–360, and 361–386; these read FMSF…HVKC, RNYC…KIQF, YFKI…VLAN, WADS…NFCR, YEDY…EYSD, ILYL…TIKT, and TPYV…VFEG.

The chain is Putative F-box/LRR-repeat protein At5g41840 from Arabidopsis thaliana (Mouse-ear cress).